The chain runs to 883 residues: Phosphoenolpyruvate carboxylase (883 aa).

Residues H138 and K546 contribute to the active site.

It belongs to the PEPCase type 1 family. Mg(2+) serves as cofactor.

It catalyses the reaction oxaloacetate + phosphate = phosphoenolpyruvate + hydrogencarbonate. Its function is as follows. Forms oxaloacetate, a four-carbon dicarboxylic acid source for the tricarboxylic acid cycle. The sequence is that of Phosphoenolpyruvate carboxylase from Klebsiella pneumoniae (strain 342).